The following is a 550-amino-acid chain: Leiomodin-2 (550 aa).

The interval 1 to 47 (MSTFGYRRGLSKYESIDEDELLASLSPEELKELERELEDIEPDRNLP) is interaction with tropomyosin alpha. Interaction with actin stretches follow at residues 1-165 (MSTF…TDNS), 166-500 (KPKT…KEIK), and 524-543 (VHEN…LRRV). Ser11, Ser15, and Ser24 each carry phosphoserine. Over residues 84-94 (ERLGECGKVAE) the composition is skewed to basic and acidic residues. 2 disordered regions span residues 84 to 202 (ERLG…PCGN) and 359 to 527 (MDKQ…VHEN). Residues 91–147 (KVAEEDKEESEEELIFTESNSEVSEEVCTEDEEESQEEEEDSEEEEDSEEEEETTEA) are a coiled coil. 2 stretches are compositionally biased toward acidic residues: residues 95–105 (EDKEESEEELI) and 113–145 (VSEE…EETT). Composition is skewed to polar residues over residues 151-164 (INGT…NTDN) and 170-193 (FKSQ…NSES). Residues 359-377 (MDKQRQKRMQEQKQQEGHD) are compositionally biased toward basic and acidic residues. The segment covering 391–402 (TPGSSPYASPRQ) has biased composition (polar residues). Ser407 is modified (phosphoserine). The segment covering 421 to 452 (PPSPVAPPPPPPPPPLPPHMLPPPPPPPAPPL) has biased composition (pro residues). Polar residues predominate over residues 468–479 (QQESAQRALQNG). Basic residues predominate over residues 480 to 490 (QRKKKGKKVKK). Positions 497-515 (KEIKNSLRSVQEKKMEDSS) are enriched in basic and acidic residues. In terms of domain architecture, WH2 spans 524 to 543 (VHENLMEAIRGSSIRQLRRV).

It belongs to the tropomodulin family. In terms of assembly, can bind at least three actin monomers and thereby provides a nucleus for actin filament formation. Interacts (via N-terminus) with tropomyosin alpha (TPM1) (via N-terminus). May also interact with TPM2 (via N-terminus). Interacts with FLII. Detected in neonate heart (at protein level). Detected in embryonic heart and in pharyngeal arches. Detected in adult heart.

The protein localises to the cytoplasm. The protein resides in the myofibril. It localises to the sarcomere. Its subcellular location is the m line. It is found in the cytoskeleton. In terms of biological role, mediates nucleation of actin filaments and thereby promotes actin polymerization. Plays a role in the regulation of actin filament length. Required for normal sarcomere organization in the heart, and for normal heart function. This Mus musculus (Mouse) protein is Leiomodin-2 (Lmod2).